Consider the following 66-residue polypeptide: Large ribosomal subunit protein bL33 (66 aa).

This sequence belongs to the bacterial ribosomal protein bL33 family.

The chain is Large ribosomal subunit protein bL33 from Wolbachia pipientis wMel.